Consider the following 495-residue polypeptide: RuBisCO large subunit-binding protein subunit alpha (495 aa).

Belongs to the chaperonin (HSP60) family. In terms of assembly, oligomer of probably six alpha and six beta subunits.

Its subcellular location is the plastid. The protein localises to the chloroplast. This protein binds RuBisCO small and large subunits and is implicated in the assembly of the enzyme oligomer. In Ricinus communis (Castor bean), this protein is RuBisCO large subunit-binding protein subunit alpha.